The primary structure comprises 982 residues: MRLFALLPVLLGLISSHFVSATDNGKTTDVTWDKYSLSVKGERVYVFSGEFHYQRLPVPELWLDVFQKLRANGFNAISIYFFWSFHSASEDTFDFENGAHDVQRVFDYAKQAGLYVIARAGPYCNAETSAGGFALWASNGQMGSTRTSASSYYDRWYPWIQEIGKIIAANQITNGGPVILNQHENELQETIHSADNTVVKYMEQIKAAFSDAGIIVPSTHNEKGMRSMSWSTDYQDVGGAVNIYGLDSYPGGLSCTNPNSGFNLVRTYYQWFQNYSSSQPEYLPEFEGGWFSAWGGSFYDQCSTELSPEFADVYYKNNIGSRVTLHNIYMVMGATSWGQSAAPVVYTSYDYSAPMRETREIRDKLKQTKLIGLFTRVSSGLLQTQMEGNGTGYTSDASIYTWALRNPETHAGFYVLAHSTSSSRAVTTTSLNVNTSAGALTIPNIELAGRQSKIIVTDYQTGDGSSLLYSSAEVLTYATLDVDVIVFYLNIGQKGEFAFKDAPTHLTFKTYGNSKVSSAKSDHGTKYTYCQGDGTTVLKFSHGVLVYLLDKETAWNFFAVPTTSNPRVAPSEQILALGPYLVRTASVSGHTVSLVGDNANATSLEVYTGNSKVTQIKWNGKETPTKKTAYGSLIGSAPGAEHAKLSLPTLKSWKAQDTLPEINPDYDDSRWTVCNKTTSVNSVAPLTLPVLYSGDYGYHAGTKIYRGRFDGVTATGANITVQNGVAAGWAAWLNGVYVGGAIGDPDLAATSAELEFTSSTLRRKDNVLTVVMDYTGHDQANVKPNGSQNPRGILGATLLGGDFTSWRIQGNAGGEANIDPVRGPMNEGGLYGERLGWHLPGYKGSKTATSESPLDGVSGAAGRFYTTTFKLDLDSDLDVPIGLQLGASADAPAVVQIFMNGYQFGHYLPHIGPQTRFPFPPGVINNRGENTLAISLWALTEQGARLSQVDLVAYGAYRTGFNFNHDWSYLQPQWENNRGQYV.

The first 21 residues, 1-21 (MRLFALLPVLLGLISSHFVSA), serve as a signal peptide directing secretion. Residues Tyr-80, Asn-125, Ala-126, Glu-127, and Asn-185 each coordinate substrate. Glu-186 functions as the Proton donor in the catalytic mechanism. Residue Tyr-249 coordinates substrate. The cysteines at positions 255 and 302 are disulfide-linked. N-linked (GlcNAc...) asparagine glycosylation is present at Asn-274. The Nucleophile role is filled by Glu-285. Residue Tyr-351 coordinates substrate. N-linked (GlcNAc...) asparagine glycosylation is found at Asn-389, Asn-434, Asn-600, Asn-675, Asn-718, and Asn-785.

It belongs to the glycosyl hydrolase 35 family.

The protein resides in the secreted. The catalysed reaction is Hydrolysis of terminal non-reducing beta-D-galactose residues in beta-D-galactosides.. Cleaves beta-linked terminal galactosyl residues from gangliosides, glycoproteins, and glycosaminoglycans. This is Probable beta-galactosidase C (lacC) from Penicillium rubens (strain ATCC 28089 / DSM 1075 / NRRL 1951 / Wisconsin 54-1255) (Penicillium chrysogenum).